The sequence spans 233 residues: Glutathione S-transferase U15 (233 aa).

Residues 5 to 85 form the GST N-terminal domain; it reads EEVKLLGTWY…YIDETWNSSG (81 aa). Residues 15-16, 42-43, 56-57, and 69-70 contribute to the glutathione site; these read SP, SK, KV, and VS. Positions 92-219 constitute a GST C-terminal domain; the sequence is HPYDRALARF…VPDIDKVAKF (128 aa). T158 bears the Phosphothreonine mark.

The protein belongs to the GST superfamily. Tau family.

Its subcellular location is the cytoplasm. The protein localises to the cytosol. The catalysed reaction is RX + glutathione = an S-substituted glutathione + a halide anion + H(+). May be involved in the conjugation of reduced glutathione to a wide number of exogenous and endogenous hydrophobic electrophiles and have a detoxification role against certain herbicides. This is Glutathione S-transferase U15 (GSTU15) from Arabidopsis thaliana (Mouse-ear cress).